We begin with the raw amino-acid sequence, 360 residues long: Complement control protein homolog (360 aa).

An N-terminal signal peptide occupies residues 1–20 (MYTLHYICLVLSCVIYFVWT). Sushi domains are found at residues 21-81 (LSCP…KCQK), 82-144 (KKCS…ICDI), 145-207 (KKCK…KCEF), and 208-266 (IFCK…ECMK). Intrachain disulfides connect cysteine 23–cysteine 68, cysteine 54–cysteine 79, cysteine 84–cysteine 125, cysteine 111–cysteine 142, cysteine 147–cysteine 191, cysteine 175–cysteine 205, cysteine 210–cysteine 252, and cysteine 238–cysteine 264. Asparagine 36, asparagine 39, asparagine 46, and asparagine 72 each carry an N-linked (GlcNAc...) asparagine; by host glycan. N-linked (GlcNAc...) asparagine; by host glycosylation occurs at asparagine 155. An N-linked (GlcNAc...) asparagine; by host glycan is attached at asparagine 294. A helical transmembrane segment spans residues 328-350 (GVLVIILTTSFIIIGIILTGVCL).

This sequence belongs to the receptors of complement activation (RCA) family.

Its subcellular location is the membrane. The protein localises to the secreted. The protein is Complement control protein homolog (4) of Saimiriine herpesvirus 2 (strain 11) (SaHV-2).